Consider the following 493-residue polypeptide: Maintenance of mitochondrial morphology protein 1 (493 aa).

The Lumenal segment spans residues 1 to 23 (MSQHSQYGVPGVPAQSSLSFTQG). A helical transmembrane segment spans residues 24–44 (FLLGQLSVVLLIGAFIKFFIF). The Cytoplasmic segment spans residues 45–493 (GEAPAPPSRG…GSMPRVVRTP (449 aa)). Residues 52–104 (SRGLASRTASHHRSYSINQGDNNANNNTNNGSSPRTLREKPSTSNVLRPVPSS) are disordered. Positions 69 to 81 (NQGDNNANNNTNN) are enriched in low complexity. Positions 93 to 104 (STSNVLRPVPSS) are enriched in polar residues. The SMP-LTD domain maps to 140-391 (QPESLDWFNV…EPRVQVVGLP (252 aa)). The segment at 420 to 493 (SSRSGGGPVE…GSMPRVVRTP (74 aa)) is disordered.

This sequence belongs to the MMM1 family. As to quaternary structure, homodimer. Component of the ER-mitochondria encounter structure (ERMES) or MDM complex, composed of mmm1, mdm10, mdm12 and mdm34. A mmm1 homodimer associates with one molecule of mdm12 on each side in a pairwise head-to-tail manner, and the SMP-LTD domains of mmm1 and mdm12 generate a continuous hydrophobic tunnel for phospholipid trafficking.

It is found in the endoplasmic reticulum membrane. Functionally, component of the ERMES/MDM complex, which serves as a molecular tether to connect the endoplasmic reticulum (ER) and mitochondria. Components of this complex are involved in the control of mitochondrial shape and protein biogenesis, and function in nonvesicular lipid trafficking between the ER and mitochondria. The mdm12-mmm1 subcomplex functions in the major beta-barrel assembly pathway that is responsible for biogenesis of all outer membrane beta-barrel proteins, and acts in a late step after the SAM complex. The mdm10-mdm12-mmm1 subcomplex further acts in the TOM40-specific pathway after the action of the mdm12-mmm1 complex. Essential for establishing and maintaining the structure of mitochondria and maintenance of mtDNA nucleoids. This chain is Maintenance of mitochondrial morphology protein 1, found in Talaromyces stipitatus (strain ATCC 10500 / CBS 375.48 / QM 6759 / NRRL 1006) (Penicillium stipitatum).